The primary structure comprises 394 residues: Ketoisovalerate oxidoreductase subunit VorA (394 aa).

In terms of assembly, heterotetramer of one alpha, one beta, one delta and one gamma chain.

It catalyses the reaction 3-methyl-2-oxobutanoate + 2 oxidized [2Fe-2S]-[ferredoxin] + CoA = 2-methylpropanoyl-CoA + 2 reduced [2Fe-2S]-[ferredoxin] + CO2 + H(+). This chain is Ketoisovalerate oxidoreductase subunit VorA (vorA), found in Pyrococcus furiosus (strain ATCC 43587 / DSM 3638 / JCM 8422 / Vc1).